A 120-amino-acid polypeptide reads, in one-letter code: NAD(P)H-quinone oxidoreductase subunit 3 (120 aa).

The next 3 helical transmembrane spans lie at 10-32 (LLGFLLLCSLVPALALSASKVLR), 64-84 (MFALVFVIFDVETVFLYPWAV), and 89-109 (LGVLAFIEALIFIAILIVGLV).

The protein belongs to the complex I subunit 3 family. In terms of assembly, NDH-1 can be composed of about 15 different subunits; different subcomplexes with different compositions have been identified which probably have different functions.

The protein resides in the cellular thylakoid membrane. The enzyme catalyses a plastoquinone + NADH + (n+1) H(+)(in) = a plastoquinol + NAD(+) + n H(+)(out). It carries out the reaction a plastoquinone + NADPH + (n+1) H(+)(in) = a plastoquinol + NADP(+) + n H(+)(out). NDH-1 shuttles electrons from an unknown electron donor, via FMN and iron-sulfur (Fe-S) centers, to quinones in the respiratory and/or the photosynthetic chain. The immediate electron acceptor for the enzyme in this species is believed to be plastoquinone. Couples the redox reaction to proton translocation, and thus conserves the redox energy in a proton gradient. Cyanobacterial NDH-1 also plays a role in inorganic carbon-concentration. The protein is NAD(P)H-quinone oxidoreductase subunit 3 of Acaryochloris marina (strain MBIC 11017).